A 423-amino-acid polypeptide reads, in one-letter code: Serine--tRNA ligase (423 aa).

231–233 (TAE) is a binding site for L-serine. 262–264 (RSE) contacts ATP. Residue glutamate 285 participates in L-serine binding. Residue 349 to 352 (EISS) participates in ATP binding. L-serine is bound at residue serine 384.

The protein belongs to the class-II aminoacyl-tRNA synthetase family. Type-1 seryl-tRNA synthetase subfamily. In terms of assembly, homodimer. The tRNA molecule binds across the dimer.

It is found in the cytoplasm. The catalysed reaction is tRNA(Ser) + L-serine + ATP = L-seryl-tRNA(Ser) + AMP + diphosphate + H(+). The enzyme catalyses tRNA(Sec) + L-serine + ATP = L-seryl-tRNA(Sec) + AMP + diphosphate + H(+). Its pathway is aminoacyl-tRNA biosynthesis; selenocysteinyl-tRNA(Sec) biosynthesis; L-seryl-tRNA(Sec) from L-serine and tRNA(Sec): step 1/1. Functionally, catalyzes the attachment of serine to tRNA(Ser). Is also able to aminoacylate tRNA(Sec) with serine, to form the misacylated tRNA L-seryl-tRNA(Sec), which will be further converted into selenocysteinyl-tRNA(Sec). The protein is Serine--tRNA ligase of Lactococcus lactis subsp. cremoris (strain SK11).